The chain runs to 285 residues: Probable glucose uptake protein GlcU (285 aa).

10 consecutive transmembrane segments (helical) span residues 4–21 (FLAI…LFNV), 26–48 (GPYS…VYIF), 52–71 (VLTP…WALG), 84–106 (VSRT…GVIV), 110–132 (WSTI…GVIL), 153–175 (IIIL…LFNV), 180–197 (ALLP…LLTF), 210–227 (IIPG…FISQ), 232–254 (VATS…ILIL), and 266–283 (IVVG…LGIA).

It belongs to the GRP transporter (TC 2.A.7.5) family.

It localises to the cell membrane. In terms of biological role, involved in the uptake of glucose. In Bacillus anthracis, this protein is Probable glucose uptake protein GlcU (glcU).